Consider the following 565-residue polypeptide: NAD-dependent malic enzyme (565 aa).

The active-site Proton donor is the Tyr104. Residue Arg157 participates in NAD(+) binding. Lys175 acts as the Proton acceptor in catalysis. Glu246, Asp247, and Asp270 together coordinate a divalent metal cation. Residues Asp270 and Asn418 each contribute to the NAD(+) site.

This sequence belongs to the malic enzymes family. In terms of assembly, homotetramer. Mg(2+) serves as cofactor. Requires Mn(2+) as cofactor.

The catalysed reaction is (S)-malate + NAD(+) = pyruvate + CO2 + NADH. It catalyses the reaction oxaloacetate + H(+) = pyruvate + CO2. The sequence is that of NAD-dependent malic enzyme from Shigella flexneri serotype 5b (strain 8401).